The sequence spans 874 residues: Alanine--tRNA ligase (874 aa).

Histidine 562, histidine 566, cysteine 664, and histidine 668 together coordinate Zn(2+).

It belongs to the class-II aminoacyl-tRNA synthetase family. Zn(2+) is required as a cofactor.

The protein localises to the cytoplasm. It carries out the reaction tRNA(Ala) + L-alanine + ATP = L-alanyl-tRNA(Ala) + AMP + diphosphate. Its function is as follows. Catalyzes the attachment of alanine to tRNA(Ala) in a two-step reaction: alanine is first activated by ATP to form Ala-AMP and then transferred to the acceptor end of tRNA(Ala). Also edits incorrectly charged Ser-tRNA(Ala) and Gly-tRNA(Ala) via its editing domain. The polypeptide is Alanine--tRNA ligase (Neisseria meningitidis serogroup C (strain 053442)).